Reading from the N-terminus, the 549-residue chain is Dicarboxylate transporter 2.2, chloroplastic (549 aa).

A chloroplast-targeting transit peptide spans 1-54 (MESLALRSISLSASYLSLHRSSSKSFALLPPSISVHTSPTLRSLSISSPRFTLR). The tract at residues 57–79 (ASSLPEEQNKPQPPPPSPPQPQG) is disordered. Over residues 67-77 (PQPPPPSPPQP) the composition is skewed to pro residues. Helical transmembrane passes span 79 to 99 (GAKLIPLAISVSIGLIVRFLI), 115 to 135 (IFLFTISGLVLGPLPVGAWAF), 151 to 171 (TAFAAFTNELIWLIAISFFFA), 220 to 240 (AGGVFLPVIKSLAISAGSYPG), 247 to 267 (LGSFLIQTQLQCSGASGAILL), 294 to 314 (WFKVASVPAFVSLLCTPLIIY), 344 to 364 (NEWIMLGAMAFTVSLWVFGEA), 365 to 385 (IGIASVVSAMIGLSTLLLLGV), 403 to 423 (WFAVLIGMAGQLTNLGVVAWM), 436 to 456 (LTWPASFIILQACYLLIHYLF), 470 to 490 (FLAMQIAAGVPGVLAALCLAF), and 523 to 543 (VGFVMALVQAIIWGGVGSFWW).

This sequence belongs to the SLC13A/DASS transporter (TC 2.A.47) family. DIT1 subfamily. In terms of tissue distribution, expressed in roots, rosette and cauline leaves, stems, flowers and siliques.

It localises to the plastid. It is found in the chloroplast inner membrane. Functionally, may be involved in the transport of dicarboxylate compounds. This Arabidopsis thaliana (Mouse-ear cress) protein is Dicarboxylate transporter 2.2, chloroplastic (DIT2-2).